Reading from the N-terminus, the 692-residue chain is Hexamerin-1.1 (692 aa).

Residues 1–18 (MKLLILAVAISLAVLASG) form the signal peptide. Asparagine 203 carries an N-linked (GlcNAc...) asparagine glycan.

Belongs to the hemocyanin family. Homohexamer. As to expression, larval fat body.

Its subcellular location is the secreted. The protein resides in the extracellular space. Functionally, larval storage protein (LSP) which may serve as a store of amino acids for synthesis of adult proteins. In Anopheles gambiae (African malaria mosquito), this protein is Hexamerin-1.1 (HexA).